The following is a 234-amino-acid chain: Proteasome subunit alpha (234 aa).

It belongs to the peptidase T1A family. In terms of assembly, the 20S proteasome core is composed of 14 alpha and 14 beta subunits that assemble into four stacked heptameric rings, resulting in a barrel-shaped structure. The two inner rings, each composed of seven catalytic beta subunits, are sandwiched by two outer rings, each composed of seven alpha subunits. The catalytic chamber with the active sites is on the inside of the barrel. Has a gated structure, the ends of the cylinder being occluded by the N-termini of the alpha-subunits. Is capped by the proteasome-associated ATPase, ARC.

Its subcellular location is the cytoplasm. The protein operates within protein degradation; proteasomal Pup-dependent pathway. The formation of the proteasomal ATPase ARC-20S proteasome complex, likely via the docking of the C-termini of ARC into the intersubunit pockets in the alpha-rings, may trigger opening of the gate for substrate entry. Interconversion between the open-gate and close-gate conformations leads to a dynamic regulation of the 20S proteasome proteolysis activity. In terms of biological role, component of the proteasome core, a large protease complex with broad specificity involved in protein degradation. This Acidothermus cellulolyticus (strain ATCC 43068 / DSM 8971 / 11B) protein is Proteasome subunit alpha.